A 286-amino-acid polypeptide reads, in one-letter code: ATP synthase gamma chain (286 aa).

Belongs to the ATPase gamma chain family. F-type ATPases have 2 components, CF(1) - the catalytic core - and CF(0) - the membrane proton channel. CF(1) has five subunits: alpha(3), beta(3), gamma(1), delta(1), epsilon(1). CF(0) has three main subunits: a, b and c.

The protein localises to the cell membrane. Produces ATP from ADP in the presence of a proton gradient across the membrane. The gamma chain is believed to be important in regulating ATPase activity and the flow of protons through the CF(0) complex. This chain is ATP synthase gamma chain, found in Ureaplasma urealyticum serovar 10 (strain ATCC 33699 / Western).